We begin with the raw amino-acid sequence, 193 residues long: Zinc finger protein AZF3 (193 aa).

2 consecutive C2H2-type zinc fingers follow at residues Y75–H97 and H118–H140.

In terms of tissue distribution, expressed in roots.

Its subcellular location is the nucleus. Its function is as follows. Transcriptional repressor probably involved in abiotic stress responses. Binds DNA in a sequence-specific manner and can repress the transactivation activity of other transcription factors. In Arabidopsis thaliana (Mouse-ear cress), this protein is Zinc finger protein AZF3 (AZF3).